The following is a 1432-amino-acid chain: ABC transporter asL7 (1432 aa).

Positions 1-20 (MFDTTKLQSSTQDGSTSSVT) are enriched in polar residues. The segment at 1-36 (MFDTTKLQSSTQDGSTSSVTGEPIFGANDPNSELNP) is disordered. The 251-residue stretch at 91 to 341 (LALPGMLIRN…FERLGFECPS (251 aa)) folds into the ABC transporter 1 domain. N265 carries N-linked (GlcNAc...) asparagine glycosylation. Helical transmembrane passes span 450–470 (PTIV…SLFF), 484–504 (VVLF…VMTL), 530–550 (VLMD…VFYF), 559–579 (GNFF…SGIF), 597–617 (MIPA…MVPI), and 702–722 (IGIV…TSEY). Positions 786–1029 (FHWRNVCYDI…TLVEYFERKA (244 aa)) constitute an ABC transporter 2 domain. Residue 822 to 829 (GVSGAGKT) participates in ATP binding. N1017 carries N-linked (GlcNAc...) asparagine glycosylation. A disordered region spans residues 1076 to 1095 (LSRLREHGSQSNSHDSEKSE). A run of 6 helical transmembrane segments spans residues 1135–1155 (FALC…SPLS), 1166–1186 (VFQL…QFII), 1215–1235 (IPYY…PIGL), 1251–1271 (LMWL…HFCI), 1279–1299 (AGAN…GALI), and 1317–1337 (LSYL…VTCA). The N-linked (GlcNAc...) asparagine glycan is linked to N1371. A helical transmembrane segment spans residues 1402–1422 (FGIIWVYVIFNISAAITLYWV).

It belongs to the ABC transporter superfamily. ABCG family. PDR (TC 3.A.1.205) subfamily.

It is found in the cell membrane. Functionally, ABC transporter; part of the gene cluster that mediates the biosynthesis of xenovulene A, an unusual meroterpenoid that has potent inhibitory effects on the human gamma-aminobutyrate A (GABAA) benzodiazepine receptor. This Sarocladium schorii (Acremonium strictum (strain IMI 501407)) protein is ABC transporter asL7.